Consider the following 489-residue polypeptide: Nuclear distribution protein PAC1 (489 aa).

Residues 66–98 (STVLRLQKKIIDLENEISNLNNIINSSNSDNNG) are a coiled coil. 7 WD repeats span residues 119 to 158 (QCEN…NTIP), 164 to 205 (AHTR…RTLN), 206 to 246 (GHEH…SLKS), 249 to 291 (GHSE…GLAM), 328 to 368 (IPLE…IAPH), 389 to 428 (GHSS…ETGS), and 437 to 486 (GHDG…NSIK).

The protein belongs to the WD repeat LIS1/nudF family. Self-associates. Interacts with NDL1 and dynein.

Its subcellular location is the cytoplasm. It localises to the cytoskeleton. It is found in the spindle pole. Its function is as follows. Positively regulates the activity of the minus-end directed microtubule motor protein dynein. Plays a central role in positioning the mitotic spindle at the bud neck during cell division. Targets cytoplasmic dynein to microtubule plus ends, thereby promoting dynein-mediated microtubule sliding along the bud cortex and consequently the movement of the mitotic spindle to the bud neck. This Candida dubliniensis (strain CD36 / ATCC MYA-646 / CBS 7987 / NCPF 3949 / NRRL Y-17841) (Yeast) protein is Nuclear distribution protein PAC1.